The chain runs to 375 residues: Peptidyl-prolyl cis-trans isomerase D (375 aa).

One can recognise a PPIase cyclophilin-type domain in the interval 7-169 (YFDITIANEP…QEVTISSAGV (163 aa)). TPR repeat units follow at residues 217-250 (AGKLKEVGTKEFKAGNFAVALDKYQKALRYLDVH), 270-307 (LPLLTNAALCALKLPASPNTSSLVVSLTSRALTLPNLS), and 312-345 (GKALYRRAQAYVLKKDDEAAEKDLKGALECVPGD).

The protein belongs to the cyclophilin-type PPIase family. PPIase D subfamily.

The protein resides in the cytoplasm. The catalysed reaction is [protein]-peptidylproline (omega=180) = [protein]-peptidylproline (omega=0). Its function is as follows. PPIases accelerate the folding of proteins. It catalyzes the cis-trans isomerization of proline imidic peptide bonds in oligopeptides. The protein is Peptidyl-prolyl cis-trans isomerase D (CPR6) of Cryptococcus neoformans var. neoformans serotype D (strain B-3501A) (Filobasidiella neoformans).